Consider the following 532-residue polypeptide: MKNIYSLFLLFALISATFANNAFIVHWNSDSISKKLTGQIGDTISFYTSDGNSHDVKSSDGSVSSSVFSGSLTNPGIFKVTLTKEGNIEFTSSYDEGLSATIVVSSGGQIPITTTSSTTTDGSSTPSTPTSTTSASTTTSGGSATTTTGEPITDGSNGGASSTTGNSGTTGSATTTTSSSSDNSDGSVGTSTTTSPAITTSSGSIIDPTSPPTTDSSSNSGGYGSSSSIENGVECLLTITQDAFDSWTYDNIIYTVYQVNLTNIGTLSVESVILTPNDNSLIYHTWELVYDGTSLTLPTYRKAGPINPEETIIFGYISRNSTDVTFALSPTCSDSSSPTPTPTETPTETPTETPTETPTETPTETPTETPTETETPTPTPSSSSSDVDSGSSSEIETPTPTETDTPTPTPSSSSSEGSGSSSETQPPITPPPTTGTSCLAQVQQKVINSWINGEVDHYIQVEATIVNQGSTPISSFNFYSDAEQIWSVEKTGTNTYKLPSWFSTIPVGGSHTFGYIVKSAELSDLEGVQYTC.

Disordered regions lie at residues 113–225 (TTTS…GYGS) and 328–436 (LSPT…TTGT). Over residues 329–426 (SPTCSDSSSP…GSGSSSETQP (98 aa)) the composition is skewed to low complexity. Tandem repeats lie at residues 339 to 342 (TPTP), 343 to 346 (TETP), 347 to 350 (TETP), 351 to 354 (TETP), 355 to 358 (TETP), 359 to 362 (TETP), 363 to 366 (TETP), 367 to 370 (TETP), 371 to 374 (TETE), 375 to 378 (TPTP), 397 to 400 (TPTP), 401 to 404 (TETD), and 405 to 408 (TPTP). Residues 339 to 378 (TPTPTETPTETPTETPTETPTETPTETPTETPTETETPTP) are 10 X 4 AA tandem repeats of T-[EP]-T-[EP]. Residues 397-408 (TPTPTETDTPTP) form a 3 X 4 AA tandem repeats of T-[EP]-T-[PD] region.

The polypeptide is Spore germination protein 270-11 (celB) (Dictyostelium discoideum (Social amoeba)).